The primary structure comprises 251 residues: Keratin-associated protein 10-10 (251 aa).

15 repeat units span residues 26–30 (CCEPC), 31–35 (CCAPA), 52–56 (CCQTA), 84–88 (CCTSS), 94–98 (CCVPV), 99–103 (CCVPV), 104–109 (CCVPVC), 126–130 (CCQQS), 136–140 (CCTSS), 146–150 (CCVPV), 168–172 (CCQQS), 178–182 (CCTAS), 183–187 (CCRPS), 202–206 (CCVPV), and 220–224 (CCRTA). Residues 26-224 (CCEPCCCAPA…SCQPSCCRTA (199 aa)) are 15 X 5 AA repeats of C-C-X(3).

It belongs to the KRTAP type 10 family. Interacts with hair keratins. Restricted to a narrow region of the hair fiber cuticle, lying approximately 20 cell layers above the apex of the dermal papilla of the hair root; not detected in any other tissues.

In the hair cortex, hair keratin intermediate filaments are embedded in an interfilamentous matrix, consisting of hair keratin-associated proteins (KRTAP), which are essential for the formation of a rigid and resistant hair shaft through their extensive disulfide bond cross-linking with abundant cysteine residues of hair keratins. The matrix proteins include the high-sulfur and high-glycine-tyrosine keratins. This Homo sapiens (Human) protein is Keratin-associated protein 10-10 (KRTAP10-10).